Consider the following 852-residue polypeptide: Thrombospondin type-1 domain-containing protein 1 (852 aa).

The N-terminal stretch at 1–24 (MKPMLKDFSNLLLVVLCDYVLGEA) is a signal peptide. The Extracellular segment spans residues 25–413 (EYLLLREPGH…QPQGPVKSNN (389 aa)). N-linked (GlcNAc...) asparagine glycosylation is found at Asn39, Asn53, Asn58, Asn69, Asn80, Asn135, and Asn304. The 54-residue stretch at 340 to 393 (TETWGLWQPWSQCSATCGDGVRERRRVCLTSFPSSPVCPGMSLEASLCSLEECA) folds into the TSP type-1 domain. 3 disulfide bridges follow: Cys352-Cys387, Cys356-Cys392, and Cys367-Cys377. A helical transmembrane segment spans residues 414 to 434 (IVTVTGISLCLFIIIATVLIT). Residues 435 to 852 (LWRRFGRPAK…STLSVEKLVI (418 aa)) are Cytoplasmic-facing. Disordered stretches follow at residues 444-517 (KCST…ESFQ) and 624-799 (LIRK…RKDK). The residue at position 463 (Ser463) is a Phosphoserine. Basic residues predominate over residues 645 to 654 (ARNAHFRRTA). Residues 655 to 669 (SFHEARQARPFRERS) are compositionally biased toward basic and acidic residues. Positions 670–685 (MSTLTPRQAPAYSSRT) are enriched in polar residues. Residues 686-696 (RTCEQAEDRFR) are compositionally biased toward basic and acidic residues. Polar residues-rich tracts occupy residues 766-778 (SHKSVSRKQSSPI) and 785-794 (QRVSSLSPSQ).

In terms of assembly, part of a complex composed of THSD1, PTK2/FAK1, TLN1 and VCL. Interacts with TLN1.

It localises to the endosome membrane. It is found in the cell junction. Its subcellular location is the focal adhesion. The protein localises to the membrane. The protein resides in the secreted. Functionally, is a positive regulator of nascent focal adhesion assembly, involved in the modulation of endothelial cell attachment to the extracellular matrix. This Homo sapiens (Human) protein is Thrombospondin type-1 domain-containing protein 1 (THSD1).